The following is an 81-amino-acid chain: Cytotoxin 1b (81 aa).

Residues 1-21 (MKTLLLTLVVVTIVCLDLGYT) form the signal peptide. Intrachain disulfides connect Cys24–Cys42, Cys35–Cys59, Cys63–Cys74, and Cys75–Cys80.

Belongs to the three-finger toxin family. Short-chain subfamily. Type IA cytotoxin sub-subfamily. In terms of assembly, monomer in solution; Homodimer and oligomer in the presence of negatively charged lipids forming a pore with a size ranging between 20 and 30 Angstroms. Expressed by the venom gland.

The protein resides in the secreted. Its subcellular location is the target cell membrane. Its function is as follows. Shows cytolytic activity on many different cells by forming pore in lipid membranes. In vivo, increases heart rate or kills the animal by cardiac arrest. In addition, it binds to heparin with high affinity, interacts with Kv channel-interacting protein 1 (KCNIP1) in a calcium-independent manner, and binds to integrin alpha-V/beta-3 (ITGAV/ITGB3) with moderate affinity. The sequence is that of Cytotoxin 1b from Naja atra (Chinese cobra).